The sequence spans 425 residues: Nucleoporin nup45 (425 aa).

Polar residues predominate over residues 1 to 10 (MFGLNKTPSF). The disordered stretch occupies residues 1 to 207 (MFGLNKTPSF…GFGLSNNTQT (207 aa)). The span at 11-27 (GSTGTQNQNTGTSAGTG) shows a compositional bias: low complexity. Residues 28–45 (LFSSNTFGNNTQANTPAS) are compositionally biased toward polar residues. Residues 47 to 56 (GFGGVTGGAF) show a composition bias toward gly residues. The segment covering 72-89 (PNATSTTPGLNLFGQNPQ) has biased composition (polar residues). Composition is skewed to low complexity over residues 112-126 (NQNQ…AAPT) and 135-150 (QNQT…ANTS). Residues 167–207 (NRPNTSTFGQFSTQPASAGLFGQSTQPSGSTGFGLSNNTQT) show a composition bias toward polar residues. Residues Ser289 and Ser290 each carry the phosphoserine modification.

It localises to the cytoplasm. It is found in the nucleus. The protein resides in the nuclear pore complex. Functions as a component of the nuclear pore complex (NPC). NPC components, collectively referred to as nucleoporins (NUPs), can play the role of both NPC structural components and of docking or interaction partners for transiently associated nuclear transport factors. Active directional transport is assured by both, a Phe-Gly (FG) repeat affinity gradient for these transport factors across the NPC and a transport cofactor concentration gradient across the nuclear envelope. This chain is Nucleoporin nup45 (nup45), found in Schizosaccharomyces pombe (strain 972 / ATCC 24843) (Fission yeast).